The chain runs to 183 residues: Shikimate kinase (183 aa).

25 to 30 (GAGKTT) is an ATP binding site. A Mg(2+)-binding site is contributed by Thr-29. Substrate contacts are provided by Asp-47, Arg-71, and Gly-93. An ATP-binding site is contributed by Arg-131. Arg-150 lines the substrate pocket.

The protein belongs to the shikimate kinase family. In terms of assembly, monomer. Mg(2+) is required as a cofactor.

Its subcellular location is the cytoplasm. It catalyses the reaction shikimate + ATP = 3-phosphoshikimate + ADP + H(+). It functions in the pathway metabolic intermediate biosynthesis; chorismate biosynthesis; chorismate from D-erythrose 4-phosphate and phosphoenolpyruvate: step 5/7. In terms of biological role, catalyzes the specific phosphorylation of the 3-hydroxyl group of shikimic acid using ATP as a cosubstrate. The sequence is that of Shikimate kinase from Dechloromonas aromatica (strain RCB).